Consider the following 54-residue polypeptide: Large ribosomal subunit protein bL32c (54 aa).

It belongs to the bacterial ribosomal protein bL32 family.

The protein resides in the plastid. The protein localises to the chloroplast. The polypeptide is Large ribosomal subunit protein bL32c (Panax ginseng (Korean ginseng)).